The chain runs to 329 residues: Palmitoyltransferase pfa3 (329 aa).

5 helical membrane-spanning segments follow: residues 14-34 (VLVI…MSGV), 49-69 (VGII…LTNL), 141-161 (FFFL…YSTF), 177-197 (AIYL…SIVM), and 243-263 (IMGK…GEGV). The 51-residue stretch at 97–147 (RFCEKCQEYKCDRSHHCSQCNKCILRMDHHCMWFKNCVGFRNHKFFFLECF) folds into the DHHC domain.

This sequence belongs to the DHHC palmitoyltransferase family. PFA3 subfamily. Autopalmitoylated.

The protein localises to the vacuole membrane. Its subcellular location is the golgi apparatus membrane. The catalysed reaction is L-cysteinyl-[protein] + hexadecanoyl-CoA = S-hexadecanoyl-L-cysteinyl-[protein] + CoA. Its function is as follows. Palmitoyltransferase specific for VAC8. Palmitoylates VAC8 at one or more of its N-terminal cysteine residues, which is required for its proper membrane localization. This Schizosaccharomyces pombe (strain 972 / ATCC 24843) (Fission yeast) protein is Palmitoyltransferase pfa3 (pfa3).